We begin with the raw amino-acid sequence, 220 residues long: MTKGILGKKVGMTQVFTDNGELVPVTVIDVTPNVVMQVKTLENDGYSAVQLGFDDKREVLSNKPEQGHAAKANTTPKRFIGEIRDAELGDDIKVGDKVAADIFAEGETVDVTGTTKGHGYQGNIHKDGQRRGPMAHGSRYHRRPGSLGAIINHVFKGKKLPGRMGNNTRTVQHLRIVKVDTENNVLLIKGNVPGANKSFVTIKNSVKANTKKSLSKQSNK.

The tract at residues 113–143 (GTTKGHGYQGNIHKDGQRRGPMAHGSRYHRR) is disordered.

It belongs to the universal ribosomal protein uL3 family. As to quaternary structure, part of the 50S ribosomal subunit. Forms a cluster with proteins L14 and L19.

Its function is as follows. One of the primary rRNA binding proteins, it binds directly near the 3'-end of the 23S rRNA, where it nucleates assembly of the 50S subunit. The sequence is that of Large ribosomal subunit protein uL3 from Limosilactobacillus fermentum (strain NBRC 3956 / LMG 18251) (Lactobacillus fermentum).